The following is a 204-amino-acid chain: Thiamine-phosphate synthase (204 aa).

4-amino-2-methyl-5-(diphosphooxymethyl)pyrimidine-binding positions include 28–32 and Asn60; that span reads QLRIK. Mg(2+) contacts are provided by Asp61 and Asp80. 2 residues coordinate 4-amino-2-methyl-5-(diphosphooxymethyl)pyrimidine: Ser99 and Lys128. 2-[(2R,5Z)-2-carboxy-4-methylthiazol-5(2H)-ylidene]ethyl phosphate contacts are provided by residues Gly157 and 177–178; that span reads VT.

It belongs to the thiamine-phosphate synthase family. Mg(2+) is required as a cofactor.

The catalysed reaction is 2-[(2R,5Z)-2-carboxy-4-methylthiazol-5(2H)-ylidene]ethyl phosphate + 4-amino-2-methyl-5-(diphosphooxymethyl)pyrimidine + 2 H(+) = thiamine phosphate + CO2 + diphosphate. It carries out the reaction 2-(2-carboxy-4-methylthiazol-5-yl)ethyl phosphate + 4-amino-2-methyl-5-(diphosphooxymethyl)pyrimidine + 2 H(+) = thiamine phosphate + CO2 + diphosphate. It catalyses the reaction 4-methyl-5-(2-phosphooxyethyl)-thiazole + 4-amino-2-methyl-5-(diphosphooxymethyl)pyrimidine + H(+) = thiamine phosphate + diphosphate. The protein operates within cofactor biosynthesis; thiamine diphosphate biosynthesis; thiamine phosphate from 4-amino-2-methyl-5-diphosphomethylpyrimidine and 4-methyl-5-(2-phosphoethyl)-thiazole: step 1/1. Condenses 4-methyl-5-(beta-hydroxyethyl)thiazole monophosphate (THZ-P) and 2-methyl-4-amino-5-hydroxymethyl pyrimidine pyrophosphate (HMP-PP) to form thiamine monophosphate (TMP). The sequence is that of Thiamine-phosphate synthase from Rhizobium etli (strain ATCC 51251 / DSM 11541 / JCM 21823 / NBRC 15573 / CFN 42).